The chain runs to 217 residues: Pro-Pro endopeptidase (217 aa).

Positions 1–27 (MKWDKRVVALILAVMIVCPLFAAPAHA) are cleaved as a signal peptide. Positions 30–216 (QSILDKLVVL…TYEFMAKLFA (187 aa)) constitute an ATLF-like domain. The interval 112–115 (SERV) is plays a crucial role in substrate specificity. Zn(2+) is bound at residue His-137. Glu-138 functions as the Proton acceptor in the catalytic mechanism. Zn(2+) is bound by residues His-141, Tyr-174, and Glu-181.

This sequence belongs to the peptidase M34 family. Pro-Pro endopeptidase subfamily. In terms of assembly, monomer. The cofactor is Zn(2+).

Its subcellular location is the secreted. The enzyme catalyses The enzyme catalyzes the hydrolytic cleavage of peptide bonds between two proline residues.. Functionally, zinc-dependent endoprotease with a unique preference for proline residues surrounding the scissile bond, which cleaves in a PLP-|-PVP motif. Cleaves the cell surface protein encoded by an adjacent gene, which contains two PPEP-2 cleaving sites and putative extracellular matrix-binding domains. Thereby, may have a role in the regulation of P.alvei adhesion. Is not able to cleave within the PVP-|-PVQ motif, and only shows a very poor cleavage of the VNP-|-PVP motif in vitro, which is the optimal substrate peptide for PPEP-1 from P.difficile. This Paenibacillus alvei (strain ATCC 6344 / DSM 29 / NBRC 3343 / NCIMB 9371 / NCTC 6352) (Bacillus alvei) protein is Pro-Pro endopeptidase.